The following is a 149-amino-acid chain: MAVTIDPKTFYANPLPGKPFYVRFEVPSDVAEKALEILSIARQTGKIKKGTNETTKAVERGLAKLVLIAEDVDPPEVVAHLPLLCEEKKVPYVYVPSKEKLGKAAGINVAAAAAVVIEAGQAAGELEALVNKINEIRAKHGLNAIPVRR.

This sequence belongs to the eukaryotic ribosomal protein eL8 family. As to quaternary structure, part of the 50S ribosomal subunit. Probably part of the RNase P complex.

It localises to the cytoplasm. Its function is as follows. Multifunctional RNA-binding protein that recognizes the K-turn motif in ribosomal RNA, the RNA component of RNase P, box H/ACA, box C/D and box C'/D' sRNAs. This Pyrobaculum calidifontis (strain DSM 21063 / JCM 11548 / VA1) protein is Large ribosomal subunit protein eL8.